The following is a 343-amino-acid chain: Signal peptide peptidase 1 (343 aa).

Residues 1-19 (MKTHERAANLALAGLSLAP) lie on the Lumenal side of the membrane. A helical transmembrane segment spans residues 20 to 40 (LVVKVEPNVNVILTACLAVYV). At 41–62 (GCYRSVKPTPPSETMSKEHAMR) the chain is on the cytoplasmic side. A helical membrane pass occupies residues 63–83 (FPLVGSAMLLSLFLLFKFLSK). Residues 84–87 (DLVN) lie on the Lumenal side of the membrane. Residues 88-108 (AVLTAYFFILGIAALCATLLP) traverse the membrane as a helical segment. The Cytoplasmic segment spans residues 109–136 (SIKRFLPKEWNDNAIVWCAPFFHSLSVE). A helical transmembrane segment spans residues 137–157 (FTKSQVVASIPGFFFCIWYAA). Residues 158–160 (KKH) lie on the Lumenal side of the membrane. The helical transmembrane segment at 161–181 (WLANNVLGISFCIQGIEMLSL) threads the bilayer. At 182–188 (GSFKTGA) the chain is on the cytoplasmic side. The chain crosses the membrane as a helical span at residues 189–209 (ILLAGLFFYDIFWVFFTPVMV). Residue Asp198 is part of the active site. The Lumenal segment spans residues 210–230 (SVAKSFDAPIKLLFPTGDAAR). A helical transmembrane segment spans residues 231–251 (PFSMLGLGDIVIPGIFVALAL). Asp239 is a catalytic residue. Residues 252–266 (RFDVSRGIKNRYFNS) are Cytoplasmic-facing. Residues 267–287 (AFLGYTVGLTVTIIVMNWFQA) traverse the membrane as a helical segment. At 288–290 (AQP) the chain is on the lumenal side. A PAL motif is present at residues 290–292 (PAL). Residues 291–311 (ALLYIVPGVIGFVAVHCLWNG) traverse the membrane as a helical segment. At 312–343 (EVKPLLEYNESKAEEEDAVEEDTDSKQNKKEE) the chain is on the cytoplasmic side. Positions 322 to 343 (SKAEEEDAVEEDTDSKQNKKEE) are disordered. The segment covering 324–334 (AEEEDAVEEDT) has biased composition (acidic residues). Residues 340–343 (KKEE) carry the Endoplasmic reticulum targeting signal motif.

The protein belongs to the peptidase A22B family. In terms of tissue distribution, ubiquitous.

It is found in the endoplasmic reticulum membrane. Intramembrane-cleaving aspartic protease (I-CLiP) that cleaves type II membrane signal peptides in the hydrophobic plane of the membrane. Catalyzes intramembrane proteolysis of some signal peptides after they have been cleaved from a preprotein, resulting in the release of the fragment from the ER membrane into the cytoplasm. In Oryza sativa subsp. japonica (Rice), this protein is Signal peptide peptidase 1 (SPP1).